The chain runs to 337 residues: Phosphate acyltransferase (337 aa).

It belongs to the PlsX family. Homodimer. Probably interacts with PlsY.

Its subcellular location is the cytoplasm. The enzyme catalyses a fatty acyl-[ACP] + phosphate = an acyl phosphate + holo-[ACP]. It participates in lipid metabolism; phospholipid metabolism. In terms of biological role, catalyzes the reversible formation of acyl-phosphate (acyl-PO(4)) from acyl-[acyl-carrier-protein] (acyl-ACP). This enzyme utilizes acyl-ACP as fatty acyl donor, but not acyl-CoA. The chain is Phosphate acyltransferase from Listeria welshimeri serovar 6b (strain ATCC 35897 / DSM 20650 / CCUG 15529 / CIP 8149 / NCTC 11857 / SLCC 5334 / V8).